A 314-amino-acid polypeptide reads, in one-letter code: Ribosomal RNA small subunit methyltransferase H (314 aa).

Residues 36–38, aspartate 56, phenylalanine 82, aspartate 104, and glutamine 111 contribute to the S-adenosyl-L-methionine site; that span reads GGH.

It belongs to the methyltransferase superfamily. RsmH family.

It localises to the cytoplasm. It catalyses the reaction cytidine(1402) in 16S rRNA + S-adenosyl-L-methionine = N(4)-methylcytidine(1402) in 16S rRNA + S-adenosyl-L-homocysteine + H(+). In terms of biological role, specifically methylates the N4 position of cytidine in position 1402 (C1402) of 16S rRNA. The protein is Ribosomal RNA small subunit methyltransferase H of Ectopseudomonas mendocina (strain ymp) (Pseudomonas mendocina).